The sequence spans 1245 residues: Trafficking protein particle complex II-specific subunit 130 homolog (1245 aa).

2 disordered regions span residues 488–524 and 884–903; these read GDGSGLDANSKPSPNKSASNYMARTMSGPATSETSLP and HVGGTDASKTSSSSTDTRKV. Composition is skewed to low complexity over residues 495–507 and 888–898; these read ANSKPSPNKSASN and TDASKTSSSST.

This sequence belongs to the TMEM1 family. Part of the multisubunit TRAPP (transport protein particle) II complex composed of BET3, BET5, TRS20, TRS23, TRS31, TRS33, TRS65, TRS85, TRS120 and TRS130.

The protein localises to the golgi apparatus. The protein resides in the trans-Golgi network. It localises to the early endosome. Specific subunit of the TRAPP II complex, a highly conserved vesicle tethering complex that is required for the proper transport of proteins in post-Golgi trafficking pathways to the growing cell plate in mitotic active cells. The chain is Trafficking protein particle complex II-specific subunit 130 homolog from Oryza sativa subsp. japonica (Rice).